We begin with the raw amino-acid sequence, 156 residues long: Cyanate hydratase (156 aa).

Catalysis depends on residues arginine 96, glutamate 99, and serine 122.

It belongs to the cyanase family.

The enzyme catalyses cyanate + hydrogencarbonate + 3 H(+) = NH4(+) + 2 CO2. Functionally, catalyzes the reaction of cyanate with bicarbonate to produce ammonia and carbon dioxide. This is Cyanate hydratase from Burkholderia cenocepacia (strain ATCC BAA-245 / DSM 16553 / LMG 16656 / NCTC 13227 / J2315 / CF5610) (Burkholderia cepacia (strain J2315)).